Reading from the N-terminus, the 637-residue chain is MPNRKYADGEVVMGRWPGSVLYYEVQVTSYDDASHLYTVKYKDGTELALKESDIRLQSSFKQRKSQSSSSSPSRRSRSRSRSRSPGRPAKGRRRSSSHSREHKEDKKKIIQETSLAPPKPSENNTRRYNGEPDSTERNDTSSKLLEQQKLKPDVEMERVLDQYSLRSRREEKKKEEIYAEKKIFEAIKTPEKPSSKTKELEFGGRFGTFMLMFFLPATVLYLVLMCKQDDPSLMNFPPLPALESLWETKVFGVFLLWFFFQALFYLLPIGKVVEGLPLSNPRKLQYRINGFYAFLLTAAAIGTLLYFQFELHYLYDHFVQFAVSAAAFSMALSIYLYIRSLKAPEEDLAPGGNSGYLVYDFFTGHELNPRIGSFDLKYFCELRPGLIGWVVINLAMLLAEMKIHNQSMPSLSMILVNSFQLLYVVDALWNEEAVLTTMDITHDGFGFMLAFGDLVWVPFVYSLQAFYLVGHPIAISWPVAAAITILNCIGYYIFRSANSQKNNFRRNPADPKLSYLKVIPTATGKGLLVTGWWGFVRHPNYLGDIIMALAWSLPCGFNHILPYFYVIYFICLLVHREARDEHHCKKKYGLAWERYCQRVPYTHISLHLLEHSTYLICKLKYTSHLCTWSVCYLGFKH.

Residues 1–62 enclose the Tudor domain; the sequence is MPNRKYADGE…DIRLQSSFKQ (62 aa). At 1–205 the chain is on the nuclear side; the sequence is MPNRKYADGE…KTKELEFGGR (205 aa). A compositionally biased stretch (low complexity) spans 57-73; the sequence is QSSFKQRKSQSSSSSPS. Residues 57-151 form a disordered region; the sequence is QSSFKQRKSQ…SKLLEQQKLK (95 aa). Residues 74-97 are compositionally biased toward basic residues; it reads RRSRSRSRSRSPGRPAKGRRRSSS. Serine 95 and serine 96 each carry phosphoserine; by PKA. Basic and acidic residues-rich tracts occupy residues 98-110 and 124-151; these read HSREHKEDKKKII and NTRRYNGEPDSTERNDTSSKLLEQQKLK. Helical transmembrane passes span 206 to 226, 250 to 270, 288 to 309, 317 to 338, 378 to 399, 403 to 425, 466 to 486, and 554 to 574; these read FGTFMLMFFLPATVLYLVLMC, VFGVFLLWFFFQALFYLLPIG, INGFYAFLLTAAAIGTLLYFQF, HFVQFAVSAAAFSMALSIYLYI, YFCELRPGLIGWVVINLAMLLA, IHNQSMPSLSMILVNSFQLLYVV, FYLVGHPIAISWPVAAAITIL, and PCGFNHILPYFYVIYFICLLV.

It belongs to the ERG4/ERG24 family. In terms of assembly, interacts with DNA. Interaction with DNA is sequence independent with higher affinity for supercoiled and relaxed circular DNA than linear DNA.

Its subcellular location is the nucleus inner membrane. It localises to the nucleus. It is found in the cytoplasm. The protein resides in the endoplasmic reticulum membrane. The enzyme catalyses 5alpha-cholest-8,14-dien-3beta-ol + NADPH + H(+) = 5alpha-cholest-8-en-3beta-ol + NADP(+). The catalysed reaction is 4,4-dimethyl-5alpha-cholesta-8,24-dien-3beta-ol + NADP(+) = 4,4-dimethyl-5alpha-cholesta-8,14,24-trien-3beta-ol + NADPH + H(+). It carries out the reaction 4,4-dimethyl-8,14-cholestadien-3beta-ol + NADPH + H(+) = 4,4-dimethyl-5alpha-cholest-8-en-3beta-ol + NADP(+). Its pathway is steroid biosynthesis; cholesterol biosynthesis. Functionally, catalyzes the reduction of the C14-unsaturated bond of lanosterol, as part of the metabolic pathway leading to cholesterol biosynthesis. Anchors the lamina and the heterochromatin to the inner nuclear membrane. This Gallus gallus (Chicken) protein is Delta(14)-sterol reductase LBR (LBR).